A 58-amino-acid chain; its full sequence is Preprotein translocase subunit SecG (58 aa).

Residues 1-32 (MAQKKKSSGSGLMSSAGLMTYYDADKKAIHVQ) are Cytoplasmic-facing. A helical membrane pass occupies residues 33 to 54 (PKTVFIFGAICGIVILAFSAGF). Residues 55-58 (GLWP) are Extracellular-facing.

It belongs to the SEC61-beta family. Component of the protein translocase complex. Heterotrimer consisting of alpha (SecY), beta (SecG) and gamma (SecE) subunits. Can form oligomers of the heterotrimer.

It localises to the cell membrane. In terms of biological role, involved in protein export. The function of the beta subunit is unknown, but it may be involved in stabilization of the trimeric complex. The sequence is that of Preprotein translocase subunit SecG from Methanococcoides burtonii (strain DSM 6242 / NBRC 107633 / OCM 468 / ACE-M).